Consider the following 88-residue polypeptide: Small ribosomal subunit protein uS17 (88 aa).

The protein belongs to the universal ribosomal protein uS17 family. As to quaternary structure, part of the 30S ribosomal subunit.

Its function is as follows. One of the primary rRNA binding proteins, it binds specifically to the 5'-end of 16S ribosomal RNA. The protein is Small ribosomal subunit protein uS17 of Prochlorococcus marinus subsp. pastoris (strain CCMP1986 / NIES-2087 / MED4).